Consider the following 317-residue polypeptide: E3 ubiquitin-protein ligase NRDP1 (317 aa).

The RING-type; degenerate zinc-finger motif lies at Cys18 to Arg57. An SIAH-type; degenerate zinc finger spans residues Lys78–Leu138.

In terms of assembly, interacts with USP8, ERBB3, PRKN and BIRC6. Interacts with CSF2RB, EPOR, IL3RA, MYD88 and TBK1. Interacts with CLEC16A. In terms of processing, autoubiquitinated. Autoubiquitination leads to proteasomal degradation. Deubiquitinated by USP8 to get stabilized which induces apoptosis. As to expression, detected in ovary, testis and prostate.

It catalyses the reaction S-ubiquitinyl-[E2 ubiquitin-conjugating enzyme]-L-cysteine + [acceptor protein]-L-lysine = [E2 ubiquitin-conjugating enzyme]-L-cysteine + N(6)-ubiquitinyl-[acceptor protein]-L-lysine.. The protein operates within protein modification; protein ubiquitination. Its function is as follows. Acts as E3 ubiquitin-protein ligase and regulates the degradation of target proteins. Polyubiquitinates MYD88. Negatively regulates MYD88-dependent production of pro-inflammatory cytokines. Can promote TRIF-dependent production of type I interferon and inhibits infection with vesicular stomatitis virus. Promotes also activation of TBK1 and IRF3. Involved in the ubiquitination of erythropoietin (EPO) and interleukin-3 (IL-3) receptors. Thus, through maintaining basal levels of cytokine receptors, RNF41 is involved in the control of hematopoietic progenitor cell differentiation into myeloerythroid lineages. Contributes to the maintenance of steady-state ERBB3 levels by mediating its growth factor-independent degradation. Involved in the degradation of the inhibitor of apoptosis BIRC6 and thus is an important regulator of cell death by promoting apoptosis. Also acts as a PRKN modifier that accelerates its degradation, resulting in a reduction of PRKN activity, influencing the balance of intracellular redox state. The RNF41-PRKN pathway regulates autophagosome-lysosome fusion during late mitophagy. Mitophagy is a selective form of autophagy necessary for mitochondrial quality control. This is E3 ubiquitin-protein ligase NRDP1 (RNF41) from Homo sapiens (Human).